The primary structure comprises 287 residues: Glucose uptake protein GlcU (287 aa).

The next 8 membrane-spanning stretches (helical) occupy residues 4 to 26 (LLALLPALFWGSIVLFNVKLGGG), 38 to 60 (ALIVSIVIYFFVQPVLSLRIFIV), 110 to 132 (WSTPIAITLGVLALIFIIVGIIL), 153 to 175 (ILILLVSTLGYLVYVVVARLFNV), 180 to 197 (ALLPQAIGMVVGGLVLTY), 210 to 227 (ILPGLIWAGGNMFLFISQ), 232 to 254 (VATSFSLSQMGIVISTLGGIFIL), and 261 to 283 (RQLIAIAIGIILIIAAAVFLGIA).

This sequence belongs to the GRP transporter (TC 2.A.7.5) family.

It is found in the cell membrane. Involved in the uptake of glucose. The chain is Glucose uptake protein GlcU (glcU) from Bacillus subtilis (strain 168).